The following is a 1844-amino-acid chain: ATPase family AAA domain-containing protein 5 (1844 aa).

S44 carries the phosphoserine modification. A Glycyl lysine isopeptide (Lys-Gly) (interchain with G-Cter in SUMO2) cross-link involves residue K127. A compositionally biased stretch (polar residues) spans Q178–K199. Positions Q178–K204 are disordered. S219, S306, S311, S354, and S369 each carry phosphoserine. The interval K368 to E384 is interaction with WDR48. Disordered regions lie at residues K477–N499, E580–L623, and K658–I700. Composition is skewed to polar residues over residues E580–K592 and R599–T608. S602, S614, and S621 each carry phosphoserine. Basic residues predominate over residues T664–N673. Residues G685–I700 show a composition bias toward polar residues. At S817 the chain carries Phosphoserine. Composition is skewed to basic and acidic residues over residues L987 to K1032 and R1092 to F1106. Disordered regions lie at residues L987–S1047 and R1092–D1118. S1116 carries the phosphoserine modification. G1132 to T1139 serves as a coordination point for ATP. 2 disordered regions span residues K1203 to K1235 and I1272 to E1292. Polar residues predominate over residues I1272–V1285. The LXCXE motif motif lies at L1428–E1432. Residues S1591–G1635 form a disordered region. Residues E1602–K1624 show a composition bias toward basic and acidic residues. The tract at residues P1630 to K1719 is interaction with RAD51 and RFC5.

This sequence belongs to the AAA ATPase family. As to quaternary structure, component of a heteropentameric replication factor ATAD5 RFC-like complex composed of one large subunit (ATAD5) and four small subunits (RFC2, RFC3, RFC4 and RFC5). Within the ATAD5 RFC-like complex, interacts with RFC2, RFC4 and RFC5. Within the ATAD5 RFC-like complex, interacts directly via-N terminal with RAD51; the interactions is enhanced under replication stress. Interacts with RB1 predominantly in G1 phase via its LXCXE motif. Interacts with RAD9A in growing cells. The interaction with RAD9A is reduced after exposure to DNA replication-inhibiting agents. Interacts with BRD4. Interacts with PCNA. Interacts with deubiquitinating enzyme USP1, and its associated factor, WDR48. Post-translationally, ATR may stimulate the RAD9A dissociation.

The protein resides in the nucleus. In terms of biological role, has an important role in DNA replication and in maintaining genome integrity during replication stress. Involved in a RAD9A-related damage checkpoint, a pathway that is important in determining whether DNA damage is compatible with cell survival or whether it requires cell elimination by apoptosis. Modulates the RAD9A interaction with BCL2 and thereby induces DNA damage-induced apoptosis. Promotes PCNA deubiquitination by recruiting the ubiquitin-specific protease 1 (USP1) and WDR48 thereby down-regulating the error-prone damage bypass pathway. As component of the ATAD5 RFC-like complex, regulates the function of the DNA polymerase processivity factor PCNA by unloading the ring-shaped PCNA homotrimer from DNA after replication during the S phase of the cell cycle. This seems to be dependent on its ATPase activity. Plays important roles in restarting stalled replication forks under replication stress, by unloading the PCNA homotrimer from DNA and recruiting RAD51 possibly through an ATR-dependent manner. Ultimately this enables replication fork regression, breakage, and eventual fork restart. Both the PCNA unloading activity and the interaction with WDR48 are required to efficiently recruit RAD51 to stalled replication forks. Promotes the generation of MUS81-mediated single-stranded DNA-associated breaks in response to replication stress, which is an alternative pathway to restart stalled/regressed replication forks. The polypeptide is ATPase family AAA domain-containing protein 5 (Homo sapiens (Human)).